The primary structure comprises 73 residues: Large ribosomal subunit protein bL31 (73 aa).

Zn(2+) contacts are provided by Cys16, Cys18, Cys37, and Cys40.

This sequence belongs to the bacterial ribosomal protein bL31 family. Type A subfamily. As to quaternary structure, part of the 50S ribosomal subunit. It depends on Zn(2+) as a cofactor.

In terms of biological role, binds the 23S rRNA. This chain is Large ribosomal subunit protein bL31, found in Marinobacter nauticus (strain ATCC 700491 / DSM 11845 / VT8) (Marinobacter aquaeolei).